The sequence spans 262 residues: Adenosylcobinamide-GDP ribazoletransferase (262 aa).

Helical transmembrane passes span tyrosine 43–glutamine 63, leucine 66–phenylalanine 86, glycine 120–leucine 140, alanine 146–phenylalanine 166, leucine 191–leucine 211, and alanine 242–leucine 262.

The protein belongs to the CobS family. Requires Mg(2+) as cofactor.

It localises to the cell inner membrane. It carries out the reaction alpha-ribazole + adenosylcob(III)inamide-GDP = adenosylcob(III)alamin + GMP + H(+). The enzyme catalyses alpha-ribazole 5'-phosphate + adenosylcob(III)inamide-GDP = adenosylcob(III)alamin 5'-phosphate + GMP + H(+). It participates in cofactor biosynthesis; adenosylcobalamin biosynthesis; adenosylcobalamin from cob(II)yrinate a,c-diamide: step 7/7. Joins adenosylcobinamide-GDP and alpha-ribazole to generate adenosylcobalamin (Ado-cobalamin). Also synthesizes adenosylcobalamin 5'-phosphate from adenosylcobinamide-GDP and alpha-ribazole 5'-phosphate. The polypeptide is Adenosylcobinamide-GDP ribazoletransferase (Shewanella baltica (strain OS155 / ATCC BAA-1091)).